The chain runs to 358 residues: tRNA pseudouridine synthase D (358 aa).

Asp-84 serves as the catalytic Nucleophile. Positions 161 to 312 (GTPNYFGPQR…RRSLRLMVAD (152 aa)) constitute a TRUD domain.

It belongs to the pseudouridine synthase TruD family.

It catalyses the reaction uridine(13) in tRNA = pseudouridine(13) in tRNA. Functionally, responsible for synthesis of pseudouridine from uracil-13 in transfer RNAs. In Nitrosococcus oceani (strain ATCC 19707 / BCRC 17464 / JCM 30415 / NCIMB 11848 / C-107), this protein is tRNA pseudouridine synthase D.